The following is a 429-amino-acid chain: Adenylosuccinate synthetase (429 aa).

GTP contacts are provided by residues 12–18 (GDEGKGK) and 40–42 (GHT). The active-site Proton acceptor is the aspartate 13. Mg(2+) contacts are provided by aspartate 13 and glycine 40. IMP contacts are provided by residues 13-16 (DEGK), 38-41 (NAGH), threonine 129, arginine 143, glutamine 223, threonine 238, and arginine 302. The active-site Proton donor is the histidine 41. 298-304 (TVTGRRR) provides a ligand contact to substrate. Residues arginine 304, 330 to 332 (KLD), and 412 to 414 (STS) contribute to the GTP site.

Belongs to the adenylosuccinate synthetase family. Homodimer. Mg(2+) is required as a cofactor.

It localises to the cytoplasm. It catalyses the reaction IMP + L-aspartate + GTP = N(6)-(1,2-dicarboxyethyl)-AMP + GDP + phosphate + 2 H(+). Its pathway is purine metabolism; AMP biosynthesis via de novo pathway; AMP from IMP: step 1/2. Functionally, plays an important role in the de novo pathway of purine nucleotide biosynthesis. Catalyzes the first committed step in the biosynthesis of AMP from IMP. This is Adenylosuccinate synthetase from Granulibacter bethesdensis (strain ATCC BAA-1260 / CGDNIH1).